Consider the following 98-residue polypeptide: Small ribosomal subunit protein bS6 (98 aa).

The protein belongs to the bacterial ribosomal protein bS6 family.

Its function is as follows. Binds together with bS18 to 16S ribosomal RNA. This Lactobacillus johnsonii (strain CNCM I-12250 / La1 / NCC 533) protein is Small ribosomal subunit protein bS6.